A 256-amino-acid polypeptide reads, in one-letter code: uncharacterized protein (256 aa).

2 disordered regions span residues methionine 1–histidine 171 and asparagine 185–aspartate 256. The stretch at lysine 14–lysine 39 forms a coiled coil. Composition is skewed to acidic residues over residues glutamate 21–glutamate 35 and serine 64–glutamate 92. Over residues asparagine 108–asparagine 129 the composition is skewed to basic and acidic residues. Gly residues predominate over residues lysine 192 to glycine 205. Residues arginine 219 to leucine 234 are compositionally biased toward basic and acidic residues.

This is an uncharacterized protein from Acanthamoeba polyphaga (Amoeba).